The chain runs to 415 residues: Tyrosine--tRNA ligase (415 aa).

Residues 54–63 carry the 'HIGH' region motif; that stretch reads PTGSNIHLGH. The short motif at 248–252 is the 'KMSKS' region element; it reads KMSKS. ATP is bound at residue lysine 251. Residues 351-414 form the S4 RNA-binding domain; the sequence is AKAFYLFSAV…LGKKTFRRLV (64 aa).

It belongs to the class-I aminoacyl-tRNA synthetase family. TyrS type 2 subfamily. As to quaternary structure, homodimer.

The protein resides in the cytoplasm. It catalyses the reaction tRNA(Tyr) + L-tyrosine + ATP = L-tyrosyl-tRNA(Tyr) + AMP + diphosphate + H(+). Functionally, catalyzes the attachment of tyrosine to tRNA(Tyr) in a two-step reaction: tyrosine is first activated by ATP to form Tyr-AMP and then transferred to the acceptor end of tRNA(Tyr). The protein is Tyrosine--tRNA ligase of Synechococcus sp. (strain CC9605).